Reading from the N-terminus, the 1231-residue chain is MNKTLGLILTSVFLLSTLGIITGFVIPTQAANSNDAAIYTIPSVTSVSNTSNIVINLFFNATSNSTVGAQASAFNYGLAINYTLDAITFTVVLPSGTSYPLIKLNAKNFANYGYYDLAHNSIVLLLNTTASSTAKELAYSYEQSIGVTPSASYKIYNYTNKTVNVNQYMNELPLSMLIYMATNGKYNNLASLPVGTKLEFTYAGVTYIIAVSPTVKLVGELLNPLYTANSKMLPGTNYAVGRSNITVAVYDNLITTTTSPFNFTLTYSSLAPALIYWFVIANTTYTNNGASTPTASFQAPPFKQYFPSNSTILYSAAPTKSSILMFNGQMNVTAHENVTLTLQTGTNIYTSPNFNVTPPGNYTFSGKLGVGFNGFIYQNGSATLTATIFNGTINFFFSSTGQKAAFTFFLVPIVPINLGDNNGATVIYNGVSLNTGFPQVVVMFNITGNFTKSGSNYLLYGSVYEAELKPLGSTQLQKLAGATDSTQFVGNLISSASSPLVSYFNYGESTTTITGTSLSFTVLMPLKFIVERLGYIYLVTFHIWGPSATVTVTGVDYHGTQIALGSFRAYVALPSFYTLPKTPLVGLTCDNMYTLAQVSDAGSVLETSTANSNANNATVIGPYDLMSNAGLHVAIYNGSKLVKSGNLGLLPNATTAPITTTITLNGQTVALTYSSAPTAIYPVDFKFEPGFSYSVTTNVIYNTSIPTYVVTVYMPLKYILQTKIVMWYVSPDYAAYFYYSSTGQYQTSNVTLTFANVTPELVMPQVFPVGKLYMPFGINDPYYVFYSSISIGPQSGVIEAVENGFNVGNITSITVELNGMNESIVLSPLNVSKLLISSNLGEVSQCSPLFTTTLFNISALASLLGLPNAAALNGSYLYVTYHDIISGAYVTNRTLLVVGQFYVMPPTTPGSVEWILTAKYINATTGIPVEISYAVVQQPSAKVVDINAANASITQIQVTGVKIVSKYATVTVMYNPSNASTIVYMNGMFVASYGGNLISSLSETSTFGVYYGAVVNLYVATGTLSSPNGTMYVVLGSHKVAVGTANLYTYAGYHFGPYTALPLVSNVTFTVQDPVTHATLTGQTTLGAFNNTPIRLAPLGVSIPQTAQYKVFYYYSTPLVLSPTSQYIVLSVTSVISYPYPFYIETVSFLGYNVTTGTPVPGTPAFQTVYSPSLGPGVVLQVPVQSYQFISLSTPSEPHTVVMFAVPFAGGPAISLYPTFLVYANVTAISS.

The N-terminal stretch at 1–35 is a signal peptide; the sequence is MNKTLGLILTSVFLLSTLGIITGFVIPTQAANSND.

It belongs to the Sulfolobales SlaA family. The mushroom-shaped unit cells of the Sulfolobales' S-layers may consist of three SlaB subunits and six SlaA subunits.

Its subcellular location is the secreted. It is found in the cell wall. The protein localises to the S-layer. Functionally, S-layer large protein. May form the highly ordered outer sheath. This is S-layer protein A from Saccharolobus solfataricus (strain ATCC 35092 / DSM 1617 / JCM 11322 / P2) (Sulfolobus solfataricus).